We begin with the raw amino-acid sequence, 670 residues long: uncharacterized protein (670 aa).

A run of 10 helical transmembrane segments spans residues 23 to 42 (YALR…YYLN), 47 to 69 (YWAM…SKSL), 76 to 98 (LLGA…FFLL), 118 to 140 (VAYA…VNIT), 153 to 170 (VCEV…MMIL), 381 to 403 (QWDA…SAVA), 410 to 432 (SLLM…GLMV), 437 to 454 (LWQF…MQLL), 461 to 483 (FAAL…NPPV), and 493 to 510 (NLAK…FAIL).

Belongs to the aromatic acid exporter ArAE (TC 2.A.85) family.

It is found in the cell membrane. This is an uncharacterized protein from Escherichia coli O157:H7.